The chain runs to 117 residues: Small ribosomal subunit protein uS8c (117 aa).

Belongs to the universal ribosomal protein uS8 family. In terms of assembly, part of the 30S ribosomal subunit.

It localises to the plastid. The protein resides in the chloroplast. Functionally, one of the primary rRNA binding proteins, it binds directly to 16S rRNA central domain where it helps coordinate assembly of the platform of the 30S subunit. In Cyanidioschyzon merolae (strain NIES-3377 / 10D) (Unicellular red alga), this protein is Small ribosomal subunit protein uS8c (rps8).